A 272-amino-acid chain; its full sequence is MPELPEVEVTRRGIEPFVAGRRVERVDVRTAMLRWPVPAGFAEMLRSREVLRVERRGKYLLFEVDAGWFIVHLGMTGTLRVLPNDAPPPAPAKHDHVDWIFDEFVLRFRDPRRFGAVLWHPRDAGDVHAHPLLASLGVEPFSAALLFGRTRGRTVSVKQALLAGDIVVGVGNIYASESLFRAGIRPTTAAGRVSLPRYERLADAVRATLADAIERGGSTLRDFVGSNGESGYFQLDCFVYDRAGEPCRVCGAPIRQIVQGQRSTYFCPNCQR.

P2 serves as the catalytic Schiff-base intermediate with DNA. E3 functions as the Proton donor in the catalytic mechanism. Catalysis depends on K58, which acts as the Proton donor; for beta-elimination activity. Residues H94, R112, and R153 each coordinate DNA. Residues 238 to 272 (FVYDRAGEPCRVCGAPIRQIVQGQRSTYFCPNCQR) form an FPG-type zinc finger. R262 (proton donor; for delta-elimination activity) is an active-site residue.

This sequence belongs to the FPG family. Monomer. Requires Zn(2+) as cofactor.

It catalyses the reaction Hydrolysis of DNA containing ring-opened 7-methylguanine residues, releasing 2,6-diamino-4-hydroxy-5-(N-methyl)formamidopyrimidine.. The enzyme catalyses 2'-deoxyribonucleotide-(2'-deoxyribose 5'-phosphate)-2'-deoxyribonucleotide-DNA = a 3'-end 2'-deoxyribonucleotide-(2,3-dehydro-2,3-deoxyribose 5'-phosphate)-DNA + a 5'-end 5'-phospho-2'-deoxyribonucleoside-DNA + H(+). In terms of biological role, involved in base excision repair of DNA damaged by oxidation or by mutagenic agents. Acts as a DNA glycosylase that recognizes and removes damaged bases. Has a preference for oxidized purines, such as 7,8-dihydro-8-oxoguanine (8-oxoG). Has AP (apurinic/apyrimidinic) lyase activity and introduces nicks in the DNA strand. Cleaves the DNA backbone by beta-delta elimination to generate a single-strand break at the site of the removed base with both 3'- and 5'-phosphates. The polypeptide is Formamidopyrimidine-DNA glycosylase (Burkholderia mallei (strain NCTC 10229)).